Consider the following 95-residue polypeptide: Aspartyl/glutamyl-tRNA(Asn/Gln) amidotransferase subunit C (95 aa).

This sequence belongs to the GatC family. As to quaternary structure, heterotrimer of A, B and C subunits.

It carries out the reaction L-glutamyl-tRNA(Gln) + L-glutamine + ATP + H2O = L-glutaminyl-tRNA(Gln) + L-glutamate + ADP + phosphate + H(+). It catalyses the reaction L-aspartyl-tRNA(Asn) + L-glutamine + ATP + H2O = L-asparaginyl-tRNA(Asn) + L-glutamate + ADP + phosphate + 2 H(+). Functionally, allows the formation of correctly charged Asn-tRNA(Asn) or Gln-tRNA(Gln) through the transamidation of misacylated Asp-tRNA(Asn) or Glu-tRNA(Gln) in organisms which lack either or both of asparaginyl-tRNA or glutaminyl-tRNA synthetases. The reaction takes place in the presence of glutamine and ATP through an activated phospho-Asp-tRNA(Asn) or phospho-Glu-tRNA(Gln). This Pseudomonas putida (strain W619) protein is Aspartyl/glutamyl-tRNA(Asn/Gln) amidotransferase subunit C.